The chain runs to 600 residues: Probable pectin methyltransferase QUA3 (600 aa).

At 1 to 18 the chain is on the cytoplasmic side; sequence MGHVNLPASKRGNPRQWR. Residues 19-39 form a helical; Signal-anchor for type II membrane protein membrane-spanning segment; it reads LLDIVTAAFFGIVLLFFILLF. Over 40-600 the chain is Lumenal; sequence TPLGDSMAAS…SLWKLPSNSH (561 aa). N283 carries an N-linked (GlcNAc...) asparagine glycan.

It belongs to the methyltransferase superfamily. In terms of tissue distribution, highly expressed and abundant in suspension-cultured cells, but low levels in seedlings.

It localises to the golgi apparatus membrane. It functions in the pathway glycan metabolism; pectin biosynthesis. In terms of biological role, S-adenosyl-L-methionine (SAM)-dependent methyltransferase (MTase) which mediates the methylesterification of the pectin homogalacturonan (HG) and thus regulates cell wall biosynthesis, at least in suspension-cultured cells. The polypeptide is Probable pectin methyltransferase QUA3 (Arabidopsis thaliana (Mouse-ear cress)).